A 100-amino-acid polypeptide reads, in one-letter code: Protein RnfH (100 aa).

This sequence belongs to the UPF0125 (RnfH) family.

The sequence is that of Protein RnfH from Actinobacillus succinogenes (strain ATCC 55618 / DSM 22257 / CCUG 43843 / 130Z).